A 262-amino-acid chain; its full sequence is Hydroxyethylthiazole kinase (262 aa).

Substrate is bound at residue Met50. Residues Arg125 and Thr171 each contribute to the ATP site. Gly198 contacts substrate.

Belongs to the Thz kinase family. Mg(2+) is required as a cofactor.

It carries out the reaction 5-(2-hydroxyethyl)-4-methylthiazole + ATP = 4-methyl-5-(2-phosphooxyethyl)-thiazole + ADP + H(+). It participates in cofactor biosynthesis; thiamine diphosphate biosynthesis; 4-methyl-5-(2-phosphoethyl)-thiazole from 5-(2-hydroxyethyl)-4-methylthiazole: step 1/1. Catalyzes the phosphorylation of the hydroxyl group of 4-methyl-5-beta-hydroxyethylthiazole (THZ). This Citrobacter koseri (strain ATCC BAA-895 / CDC 4225-83 / SGSC4696) protein is Hydroxyethylthiazole kinase.